The sequence spans 137 residues: Small ribosomal subunit protein uS12 (137 aa).

Residues 1 to 28 form a disordered region; that stretch reads MPTINQLVRKPRKSKAKKSDSPALNKGF. Asp102 is modified (3-methylthioaspartic acid).

This sequence belongs to the universal ribosomal protein uS12 family. Part of the 30S ribosomal subunit. Contacts proteins S8 and S17. May interact with IF1 in the 30S initiation complex.

With S4 and S5 plays an important role in translational accuracy. Functionally, interacts with and stabilizes bases of the 16S rRNA that are involved in tRNA selection in the A site and with the mRNA backbone. Located at the interface of the 30S and 50S subunits, it traverses the body of the 30S subunit contacting proteins on the other side and probably holding the rRNA structure together. The combined cluster of proteins S8, S12 and S17 appears to hold together the shoulder and platform of the 30S subunit. The polypeptide is Small ribosomal subunit protein uS12 (Staphylococcus carnosus (strain TM300)).